A 96-amino-acid polypeptide reads, in one-letter code: Aspartyl/glutamyl-tRNA(Asn/Gln) amidotransferase subunit C (96 aa).

Belongs to the GatC family. As to quaternary structure, heterotrimer of A, B and C subunits.

The catalysed reaction is L-glutamyl-tRNA(Gln) + L-glutamine + ATP + H2O = L-glutaminyl-tRNA(Gln) + L-glutamate + ADP + phosphate + H(+). It catalyses the reaction L-aspartyl-tRNA(Asn) + L-glutamine + ATP + H2O = L-asparaginyl-tRNA(Asn) + L-glutamate + ADP + phosphate + 2 H(+). In terms of biological role, allows the formation of correctly charged Asn-tRNA(Asn) or Gln-tRNA(Gln) through the transamidation of misacylated Asp-tRNA(Asn) or Glu-tRNA(Gln) in organisms which lack either or both of asparaginyl-tRNA or glutaminyl-tRNA synthetases. The reaction takes place in the presence of glutamine and ATP through an activated phospho-Asp-tRNA(Asn) or phospho-Glu-tRNA(Gln). The sequence is that of Aspartyl/glutamyl-tRNA(Asn/Gln) amidotransferase subunit C from Trichormus variabilis (strain ATCC 29413 / PCC 7937) (Anabaena variabilis).